Consider the following 284-residue polypeptide: Bifunctional protein FolD 1 (284 aa).

Residues 166–168 and isoleucine 232 contribute to the NADP(+) site; that span reads GAS.

The protein belongs to the tetrahydrofolate dehydrogenase/cyclohydrolase family. As to quaternary structure, homodimer.

It catalyses the reaction (6R)-5,10-methylene-5,6,7,8-tetrahydrofolate + NADP(+) = (6R)-5,10-methenyltetrahydrofolate + NADPH. The enzyme catalyses (6R)-5,10-methenyltetrahydrofolate + H2O = (6R)-10-formyltetrahydrofolate + H(+). Its pathway is one-carbon metabolism; tetrahydrofolate interconversion. Its function is as follows. Catalyzes the oxidation of 5,10-methylenetetrahydrofolate to 5,10-methenyltetrahydrofolate and then the hydrolysis of 5,10-methenyltetrahydrofolate to 10-formyltetrahydrofolate. In Pseudomonas syringae pv. tomato (strain ATCC BAA-871 / DC3000), this protein is Bifunctional protein FolD 1.